The chain runs to 492 residues: JmjC domain-containing histone demethylation protein 1 (492 aa).

The PHD-type; atypical zinc finger occupies 4-72 (PNICQHCQLK…SYRCPNHKEG (69 aa)). Residues 254 to 409 (TAVRQNDLVD…THLKIVEIEK (156 aa)) form the JmjC domain. Position 302 (Thr-302) interacts with substrate. His-305 and Asp-307 together coordinate Fe cation. Residue Lys-322 coordinates substrate. His-377 provides a ligand contact to Fe cation.

This sequence belongs to the JHDM1 histone demethylase family. The cofactor is Fe(2+).

Its subcellular location is the nucleus. It catalyses the reaction N(6),N(6)-dimethyl-L-lysyl(36)-[histone H3] + 2 2-oxoglutarate + 2 O2 = L-lysyl(36)-[histone H3] + 2 formaldehyde + 2 succinate + 2 CO2. Its function is as follows. Histone demethylase that specifically demethylates 'Lys-36' of histone H3, thereby playing a central role in histone code. Does not demethylate H3 'Lys-4' nor 'Lys-79'. The protein is JmjC domain-containing histone demethylation protein 1 (JHD1) of Saccharomyces cerevisiae (strain ATCC 204508 / S288c) (Baker's yeast).